A 371-amino-acid polypeptide reads, in one-letter code: Queuine tRNA-ribosyltransferase (371 aa).

The active-site Proton acceptor is Asp89. Residues 89–93 (DSGGF), Asp143, Gln185, and Gly212 each bind substrate. Residues 243–249 (GVGTPED) are RNA binding. Residue Asp262 is the Nucleophile of the active site. The tract at residues 267–271 (TRNAR) is RNA binding; important for wobble base 34 recognition. Residues Cys300, Cys302, Cys305, and His331 each coordinate Zn(2+).

It belongs to the queuine tRNA-ribosyltransferase family. Homodimer. Within each dimer, one monomer is responsible for RNA recognition and catalysis, while the other monomer binds to the replacement base PreQ1. Requires Zn(2+) as cofactor.

It carries out the reaction 7-aminomethyl-7-carbaguanine + guanosine(34) in tRNA = 7-aminomethyl-7-carbaguanosine(34) in tRNA + guanine. Its pathway is tRNA modification; tRNA-queuosine biosynthesis. In terms of biological role, catalyzes the base-exchange of a guanine (G) residue with the queuine precursor 7-aminomethyl-7-deazaguanine (PreQ1) at position 34 (anticodon wobble position) in tRNAs with GU(N) anticodons (tRNA-Asp, -Asn, -His and -Tyr). Catalysis occurs through a double-displacement mechanism. The nucleophile active site attacks the C1' of nucleotide 34 to detach the guanine base from the RNA, forming a covalent enzyme-RNA intermediate. The proton acceptor active site deprotonates the incoming PreQ1, allowing a nucleophilic attack on the C1' of the ribose to form the product. After dissociation, two additional enzymatic reactions on the tRNA convert PreQ1 to queuine (Q), resulting in the hypermodified nucleoside queuosine (7-(((4,5-cis-dihydroxy-2-cyclopenten-1-yl)amino)methyl)-7-deazaguanosine). The polypeptide is Queuine tRNA-ribosyltransferase (Nitrosomonas europaea (strain ATCC 19718 / CIP 103999 / KCTC 2705 / NBRC 14298)).